A 489-amino-acid chain; its full sequence is Dipeptide and tripeptide permease B (489 aa).

Residues Met1–Arg27 lie on the Cytoplasmic side of the membrane. Residues Phe28–Ser48 traverse the membrane as a helical segment. Topologically, residues Gln49–Ala52 are periplasmic. Residues Phe53 to Val73 form a helical membrane-spanning segment. The Cytoplasmic portion of the chain corresponds to Gly74–Arg82. Residues Thr83–Leu103 traverse the membrane as a helical segment. At Asn104–Asp106 the chain is on the periplasmic side. The chain crosses the membrane as a helical span at residues Leu107–Ala127. Residues Ser128–Thr146 are Cytoplasmic-facing. The chain crosses the membrane as a helical span at residues Leu147–Ala167. Residues Asp168–Tyr172 lie on the Periplasmic side of the membrane. The helical transmembrane segment at Ala173 to Cys193 threads the bilayer. At Arg194–Leu214 the chain is on the cytoplasmic side. A helical transmembrane segment spans residues Leu215–Val235. Position 236 (Lys236) is a topological domain, periplasmic. A helical membrane pass occupies residues Ile237–Ala257. The Cytoplasmic portion of the chain corresponds to Phe258 to Lys267. A helical membrane pass occupies residues Met268–Met288. At Pro289–Gln315 the chain is on the periplasmic side. A helical transmembrane segment spans residues Ala316 to Ser338. The Cytoplasmic portion of the chain corresponds to Lys339–Lys348. A helical membrane pass occupies residues Phe349–Phe369. At Ala370–Trp379 the chain is on the periplasmic side. The helical transmembrane segment at Phe380–Leu400 threads the bilayer. The Cytoplasmic segment spans residues Ala401–His410. Residues Leu411–Gly431 form a helical membrane-spanning segment. The Periplasmic portion of the chain corresponds to Tyr432–Thr454. A helical transmembrane segment spans residues Gly455–Val475. The Cytoplasmic segment spans residues Pro476–Gln489.

Belongs to the major facilitator superfamily. Proton-dependent oligopeptide transporter (POT/PTR) (TC 2.A.17) family. DtpB subfamily.

The protein resides in the cell inner membrane. Its function is as follows. Proton-dependent permease that transports di- and tripeptides. This is Dipeptide and tripeptide permease B from Salmonella typhimurium (strain LT2 / SGSC1412 / ATCC 700720).